We begin with the raw amino-acid sequence, 202 residues long: GPI-anchored hemophore cfmB (202 aa).

The N-terminal stretch at 1-18 is a signal peptide; the sequence is MHFSRTSLILFAAGLASA. Residues 19 to 108 form the CFEM domain; it reads QLPNVPGCSL…STTASETATT (90 aa). 4 cysteine pairs are disulfide-bonded: cysteine 26–cysteine 67, cysteine 30–cysteine 62, cysteine 40–cysteine 48, and cysteine 50–cysteine 83. Aspartate 45 contacts heme. The segment at 94-171 is disordered; that stretch reads PVGAASTTAS…PSSQSTSASA (78 aa). The segment covering 97 to 171 has biased composition (low complexity); the sequence is AASTTASETA…PSSQSTSASA (75 aa). Residue asparagine 180 is the site of GPI-anchor amidated asparagine attachment. The propeptide at 181-202 is removed in mature form; that stretch reads AGSEKANVAGVVAVAAAALYLL.

Belongs to the RBT5 family. In terms of processing, the GPI-anchor is attached to the protein in the endoplasmic reticulum and serves to target the protein to the cell surface. There, the glucosamine-inositol phospholipid moiety is cleaved off and the GPI-modified mannoprotein is covalently attached via its lipidless GPI glycan remnant to the 1,6-beta-glucan of the outer cell wall layer.

The protein resides in the secreted. It localises to the cell wall. The protein localises to the cell membrane. In terms of biological role, GPI-anchored cell wall protein involved in stabilizing the cell wall. Not implicated in virulence, heme uptake and biofilm formation. This Aspergillus fumigatus (strain ATCC MYA-4609 / CBS 101355 / FGSC A1100 / Af293) (Neosartorya fumigata) protein is GPI-anchored hemophore cfmB.